A 213-amino-acid polypeptide reads, in one-letter code: MSKTSMQMGLDFTLVAEVEELVAGVDEVGRGPLCGAVVTAAVILDPNRPILGLNDSKKLTEAKREKLYDEICEKALSWCIARAEVEEIDELNILHATMLAMQRAVAGLHIQPKLAMIDGNRCPKLPMRSEAVVKGDSKVPAIAAASILAKVSRDREMAAFELIYPGYGISGHKGYPTPVHLEALVRLGPTPIHRRSFAPVRQAYEALEGLVQV.

An RNase H type-2 domain is found at 20 to 209 (ELVAGVDEVG…VRQAYEALEG (190 aa)). Residues Asp-26, Glu-27, and Asp-118 each coordinate a divalent metal cation.

Belongs to the RNase HII family. Mn(2+) serves as cofactor. Mg(2+) is required as a cofactor.

The protein localises to the cytoplasm. It catalyses the reaction Endonucleolytic cleavage to 5'-phosphomonoester.. Its function is as follows. Endonuclease that specifically degrades the RNA of RNA-DNA hybrids. The sequence is that of Ribonuclease HII from Pseudomonas fluorescens (strain Pf0-1).